The primary structure comprises 154 residues: Egg-lysin (154 aa).

The first 18 residues, 1–18 (MKLFVLCIFAMMATLAMS), serve as a signal peptide directing secretion.

In terms of assembly, homodimer. In terms of tissue distribution, sperm.

In terms of biological role, dissolves the egg vitelline layer nonenzymatically during fertilization. It creates a hole of about 3 mu-m in diameter through which the sperm pass. This chain is Egg-lysin, found in Haliotis kamtschatkana (Pinto abalone).